Here is a 557-residue protein sequence, read N- to C-terminus: MEFLGTTQTASFCGPKKGCGLQALPPAGQEPVVQECYQPFHLPGYRYLNAWRPSVFHKIATSQTIPEECSGIRRPPTILPSLRSALFCRYTPRDWDRSNDLQIRNAEASRLWASRLTGDSLRIMQDKDQLIHQMQEGTSRNLGQRLSDLGFWKSELCYELDRLLTENSSMDTLKRRLECAAEEVNCPLQVALECLYNREKRIGIDLVHDNVEKNLIREVDLLKCCQDQMRKLAKRIDFQIRDNRDAQHSLERDIEDKSSAQYIDENCFNLRSTSDSISFFHGVEKFDGTVSIPETWAKFSNDNIRHAQNMRANSIRLREEAEHLFETLSDQMWKQFTNTNLAFNARISEETDVKNKLQTQLAKILQEIFQAENTIMLLERAIVAKEYPLKMAQTMLACRTRRPNVELCRDVPQFRLVNEVFTIDDTLQTLKLRLRETQDTLQLLVMTKSRLEHELAIKANTLCIDKDKCMSMRKSFPSTPRLTGYTCSAIGSGPYANHAPRISSGPCSGSALCKGPASCGGGASCGGGASCGGHAPCGSALCSHSVSRSGPGFAPVC.

Residues 302 to 386 (DNIRHAQNMR…LLERAIVAKE (85 aa)) are a coiled coil. Tandem repeats lie at residues 507-512 (CSGSAL), 513-518 (CKGPAS), 519-524 (CGGGAS), 525-530 (CGGGAS), 531-536 (CGGHAP), and 537-541 (CGSAL). Positions 507–541 (CSGSALCKGPASCGGGASCGGGASCGGHAPCGSAL) are 6 X 6 AA approximate tandem repeats of C-[GSK]-G-[GSPH]-A-[SLP].

This sequence belongs to the tektin family. Microtubule inner protein component of sperm flagellar doublet microtubules. Interacts with TEKT3. Post-translationally, ubiquitinated, leading to its degradation. Deubiquitinated by USP16, promoting its stability. Strongly expressed in germ cells of the testis (at protein level). Expressed in spermatozoa. Also detected in brain.

It is found in the cytoplasm. Its subcellular location is the cytoskeleton. It localises to the flagellum axoneme. Sperm-specific microtubule inner protein (MIP) part of the dynein-decorated doublet microtubules (DMTs) in flagellar axoneme. Forms an extensive interaction network in different conformations that reinforces the helix bundle composed by other tektin proteins (TEKT1 to TEKT4) and MIPs to anchor the tektin bundle onto the tubulin wall of A-tubule of the sperm flagellum. In Mus musculus (Mouse), this protein is Tektin-5.